The primary structure comprises 344 residues: Envelope glycoprotein M (344 aa).

Residues 1–12 lie on the Intravirion side of the membrane; that stretch reads MASSRVDTINLR. The helical transmembrane segment at 13-33 threads the bilayer; that stretch reads IWLVSIICAALSFINVTVHLI. Residues 34 to 76 lie on the Virion surface side of the membrane; it reads AINFPNLGFPCAYFEINDLKAVNLSANNEIYQMTHQLYINPVQ. The helical transmembrane segment at 77-97 threads the bilayer; the sequence is IICYVLIMAILFLLIIIYYIV. Topologically, residues 98–125 are intravirion; it reads CCAKVFSSNKTSNVNQTTRDITWMGDTS. A helical membrane pass occupies residues 126–146; sequence SCFQFILIMDTFQLFVTALSF. R147 is a topological domain (virion surface). Residues 148–168 form a helical membrane-spanning segment; that stretch reads LVALGAFAYSIFFVCFTTFNV. At 169 to 203 the chain is on the intravirion side; it reads TLITQFQSADKSFFAFQKIHPNLKGTVQFKTVVIN. The chain crosses the membrane as a helical span at residues 204-224; sequence LSELMLGYSTMFLGITTCLGV. Residues 225-238 lie on the Virion surface side of the membrane; it reads GNSIYIRSITVAFS. Residues 239–259 traverse the membrane as a helical segment; sequence SINTFLVMACIYSIVIEAVLV. Topologically, residues 260-263 are intravirion; it reads RYVK. The chain crosses the membrane as a helical span at residues 264–284; that stretch reads PLFGYYVGMFCGAVGLSFPIL. Residues 285–293 lie on the Virion surface side of the membrane; the sequence is QYETFFESE. The chain crosses the membrane as a helical span at residues 294–314; that stretch reads WSTGLIINLSVVAIISIGFII. The Intravirion portion of the chain corresponds to 315 to 344; sequence CRLVRYLVKKKRRYKQLLNAESSSLMDENE.

The protein belongs to the herpesviridae glycoprotein M family. In terms of assembly, interacts (via N-terminus) with gN (via N-terminus). The gM-gN heterodimer forms the gCII complex.

The protein resides in the virion membrane. It localises to the host Golgi apparatus. Its subcellular location is the host trans-Golgi network. The protein localises to the host endosome membrane. It is found in the host nucleus inner membrane. Its function is as follows. Envelope glycoprotein important for virion assembly and egress. Plays a role in the correct incorporation of gH-gL into virion membrane. Directs the glycoprotein N (gN) to the host trans-Golgi network. This chain is Envelope glycoprotein M, found in Homo sapiens (Human).